The primary structure comprises 328 residues: tRNA uridine(34) hydroxylase (328 aa).

Residues 130–224 (LDKDTVVLDT…YGKDPEVQGE (95 aa)) enclose the Rhodanese domain. Residue Cys184 is the Cysteine persulfide intermediate of the active site.

It belongs to the TrhO family.

The enzyme catalyses uridine(34) in tRNA + AH2 + O2 = 5-hydroxyuridine(34) in tRNA + A + H2O. Its function is as follows. Catalyzes oxygen-dependent 5-hydroxyuridine (ho5U) modification at position 34 in tRNAs. This is tRNA uridine(34) hydroxylase from Streptococcus pneumoniae (strain ATCC 700669 / Spain 23F-1).